Consider the following 453-residue polypeptide: Aspartate aminotransferase, chloroplastic (453 aa).

Residues 1 to 44 (MASLMLSLGSTSLLPREINKDKLKLGTSASNPFLKAKSFSRVTM) constitute a chloroplast transit peptide. L-aspartate-binding residues include Gly-85, Trp-181, and Asn-234. Position 298 is an N6-(pyridoxal phosphate)lysine (Lys-298). Arg-427 is an L-aspartate binding site.

This sequence belongs to the class-I pyridoxal-phosphate-dependent aminotransferase family. In terms of assembly, homodimer. Pyridoxal 5'-phosphate is required as a cofactor.

It is found in the plastid. It localises to the chloroplast. The protein localises to the amyloplast. The catalysed reaction is L-aspartate + 2-oxoglutarate = oxaloacetate + L-glutamate. In terms of biological role, amino acid aminotransferase important for the metabolism of amino acids and Krebs-cycle related organic acids. No activity with D-Asp or D-Ala as amino donors. In plants, it is involved in nitrogen metabolism and in aspects of carbon and energy metabolism. The chain is Aspartate aminotransferase, chloroplastic (ASP5) from Arabidopsis thaliana (Mouse-ear cress).